A 138-amino-acid polypeptide reads, in one-letter code: MAKSIPRISSRRNGRIGSGNNVRRIPKGVIHVQASFHNTIVTVTDVRGRVVSWSSAGTSGFKGTRRGTPFAAQTAATNAIRTVVDQGMLRAEVLIKGPGLGRDAALRAIRRSGILLTFVRDLTPMPHNGCRPPKQRRV.

The interval 1 to 22 is disordered; that stretch reads MAKSIPRISSRRNGRIGSGNNV.

This sequence belongs to the universal ribosomal protein uS11 family. As to quaternary structure, part of the 30S ribosomal subunit.

The protein localises to the plastid. This is Small ribosomal subunit protein uS11c from Cuscuta reflexa (Southern Asian dodder).